The primary structure comprises 309 residues: Homoserine O-succinyltransferase (309 aa).

C142 serves as the catalytic Acyl-thioester intermediate. Residues K163 and S192 each contribute to the substrate site. The active-site Proton acceptor is the H235. Residue E237 is part of the active site. R249 contacts substrate.

Belongs to the MetA family.

Its subcellular location is the cytoplasm. The enzyme catalyses L-homoserine + succinyl-CoA = O-succinyl-L-homoserine + CoA. Its pathway is amino-acid biosynthesis; L-methionine biosynthesis via de novo pathway; O-succinyl-L-homoserine from L-homoserine: step 1/1. In terms of biological role, transfers a succinyl group from succinyl-CoA to L-homoserine, forming succinyl-L-homoserine. The polypeptide is Homoserine O-succinyltransferase (Yersinia enterocolitica serotype O:8 / biotype 1B (strain NCTC 13174 / 8081)).